We begin with the raw amino-acid sequence, 390 residues long: ATP-sensitive inward rectifier potassium channel 11 (390 aa).

The Cytoplasmic portion of the chain corresponds to 1-65 (MLSRKGIIPE…LQDVFTTLVD (65 aa)). ATP is bound by residues N48 and R50. The chain crosses the membrane as a helical span at residues 66 to 92 (LKWPHTLLIFTMSFLCSWLLFAMAWWL). At 93 to 116 (IAFAHGDLAPSEGTAEPCVTSIHS) the chain is on the extracellular side. Residues C110 and C142 are joined by a disulfide bond. The segment at residues 117 to 133 (FSSAFLFSIEVQVTIGF) is an intramembrane region (discontinuously helical; Pore-forming). Positions 130 and 133 each coordinate K(+). The Selectivity filter signature appears at 130 to 135 (TIGFGG). At 134–142 (GGRMVTEEC) the chain is on the extracellular side. The chain crosses the membrane as a helical span at residues 143–171 (PLAILILIVQNIVGLMINAIMLGCIFMKT). Residues 172 to 390 (AQAHRRAETL…KFSISPDSLS (219 aa)) lie on the Cytoplasmic side of the membrane. An a 1,2-diacyl-sn-glycero-3-phospho-(1D-myo-inositol-4,5-bisphosphate)-binding site is contributed by R176. Y330 provides a ligand contact to ATP. T341 carries the post-translational modification Phosphothreonine; by MAPK1. S385 is modified (phosphoserine; by MAPK1).

The protein belongs to the inward rectifier-type potassium channel (TC 1.A.2.1) family. KCNJ11 subfamily. As to quaternary structure, homotetramer; the homotetramer binds four ATP molecules (one ATP per subunit). Forms an heterooctamer with ABCC8/SUR1; one KCNJ11 homotetramer interacts with four ABCC8/SUR1 molecules. Interacts with ABCC9/SUR2. Post-translationally, phosphorylation by MAPK1 results in changes in channel gating that destabilize the closed states and reduce the ATP sensitivity.

Its subcellular location is the membrane. The catalysed reaction is K(+)(in) = K(+)(out). KATP channels are regulated by cytoplasmic ATP/ADP ratios; ATP inhibits the channel by closing the pore, while ADP activates the channel. Activated by phosphatidylinositol 4,5-biphosphate (PtdIns(4,5)P2). Its function is as follows. Inward rectifier potassium channel that forms the pore of ATP-sensitive potassium channels (KATP), regulating potassium permeability as a function of cytoplasmic ATP and ADP concentrations in many different cells. Inward rectifier potassium channels are characterized by a greater tendency to allow potassium to flow into the cell rather than out of it. Their voltage dependence is regulated by the concentration of extracellular potassium; as external potassium is raised, the voltage range of the channel opening shifts to more positive voltages. The inward rectification is mainly due to the blockage of outward current by internal magnesium. Can be blocked by extracellular barium. In pancreatic cells, it forms KATP channels with ABCC8/SUR1. Can form cardiac and smooth muscle-type KATP channels with ABCC9. The polypeptide is ATP-sensitive inward rectifier potassium channel 11 (KCNJ11) (Homo sapiens (Human)).